The sequence spans 527 residues: Peptide chain release factor 3 (527 aa).

The tr-type G domain maps to 9-277 (AKRRTFAIIS…AVVDWAPRPL (269 aa)). GTP-binding positions include 18-25 (SHPDAGKT), 86-90 (DTPGH), and 140-143 (NKLD).

It belongs to the TRAFAC class translation factor GTPase superfamily. Classic translation factor GTPase family. PrfC subfamily.

The protein resides in the cytoplasm. Increases the formation of ribosomal termination complexes and stimulates activities of RF-1 and RF-2. It binds guanine nucleotides and has strong preference for UGA stop codons. It may interact directly with the ribosome. The stimulation of RF-1 and RF-2 is significantly reduced by GTP and GDP, but not by GMP. This chain is Peptide chain release factor 3, found in Pseudomonas putida (strain ATCC 47054 / DSM 6125 / CFBP 8728 / NCIMB 11950 / KT2440).